We begin with the raw amino-acid sequence, 198 residues long: Penicillin-binding protein activator LpoB (198 aa).

The signal sequence occupies residues 1–19; it reads MIRSVNRTGALMMALILSG. The N-palmitoyl cysteine moiety is linked to residue C20. C20 carries the S-diacylglycerol cysteine lipid modification. A compositionally biased stretch (low complexity) spans 26 to 37; the sequence is QPAPVEPTQPVE. The tract at residues 26 to 59 is disordered; sequence QPAPVEPTQPVEPVQPVPQPEQPIPQPQPVPQPP. A compositionally biased stretch (pro residues) spans 38 to 59; it reads PVQPVPQPEQPIPQPQPVPQPP.

The protein belongs to the LpoB family. In terms of assembly, interacts with PBP1b.

Its subcellular location is the cell outer membrane. Functionally, regulator of peptidoglycan synthesis that is essential for the function of penicillin-binding protein 1B (PBP1b). In Pantoea ananatis (strain LMG 20103), this protein is Penicillin-binding protein activator LpoB.